The primary structure comprises 972 residues: MDTDLYDEFGNYIGPELDSDDEDDELGRESKELDELEDDDDDDDMGDHDEDHPGMEVVLHEDKKYYPTAEEVYGPEVETIVQEEDTQPLTEPIIKPVKTKKFSLMEQTLPVTVYEMDFLADLMDNSELIRNVTLCGHLHHGKTCFVDCLIEQTHPEIRKRYDQDLCYTDILFTEQERGVGIKSTPVTIVLPDTKGKSFLFNIIDTPGHVNFSDEVTAGLRISDGVVLFIDAAEGVMLNTERLIKHAVQERLAVTVCINKIDRLILELKLPPTDAYYKLRHIVDEVNGLISMYSTDENLVLSPLLGNVCFSSSQYSICFTLGSFAKIYADTYGDINYQEFAKRLWGDIYFNPKTRKFTKKAPTSSSQRSFVEFILEPLYKILAQVVGDVDTTLPRTLDELGIHLTKEELKLNIRPLLRLVCKKFFGEFTGFVDMCVQHIPSPKVGAKTKIEHTYTGGVDSDLGEAMSECDPDGPLMCHTTKMYSTDDGVQFHAFGRVLSGTIHAGQPVKVLGENYTLEDEEDSQICTVGRLWISVARYHIEVNRVPAGNWVLIEGVDQPIVKTATVTEPRGNEEAQIFRPLKFNTTSVIKIAVEPVNPSELPKMLDGLRKVNKSYPSLTTKVEESGEHVILGTGELYLDCVMHDLRKMYSEIDIKVADPVVTFCETVVETSSLKCFAETPNKKNKITMIAEPLEKGLAEDIENEVVQITWNRKKLGEFFQTKYDWDLLAARSIWAFGPDATGPNILVDDTLPSEVDKALLGSVKDSIVQGFQWGTREGPLCDELIRNVKFKILDAVIAQEPLHRGGGQIIPTARRVVYSAFLMATPRLMEPYYFVEVQAPADCVSAVYTVLARRRGHVTQDAPIPGSPLYTIKAFIPAIDSFGFETDLRTHTQGQAFSLSVFHHWQIVPGDPLDKSIVIRPLEPQPAPHLAREFMIKTRRRKGLSEDVSISKFFDDPMLLELAKQDVVLNYPM.

The disordered stretch occupies residues 1–53 (MDTDLYDEFGNYIGPELDSDDEDDELGRESKELDELEDDDDDDDMGDHDEDHP). 2 stretches are compositionally biased toward acidic residues: residues 17–26 (LDSDDEDDEL) and 34–48 (DELE…MGDH). A tr-type G domain is found at 127 to 409 (ELIRNVTLCG…GIHLTKEELK (283 aa)). Residues 136-143 (GHLHHGKT), 204-208 (DTPGH), and 258-261 (NKID) each bind GTP.

This sequence belongs to the TRAFAC class translation factor GTPase superfamily. Classic translation factor GTPase family. EF-G/EF-2 subfamily. As to quaternary structure, component of the U5 snRNP and the U4/U6-U5 tri-snRNP complex, a building block of the spliceosome. Component of the pre-catalytic, catalytic and post-catalytic spliceosome complexes. Component of the minor spliceosome, which splices U12-type introns.

The protein resides in the nucleus. Required for pre-mRNA splicing as component of the spliceosome, including pre-catalytic, catalytic and post-catalytic spliceosomal complexes. Component of the U5 snRNP and the U4/U6-U5 tri-snRNP complex, a building block of the spliceosome. As a component of the minor spliceosome, involved in the splicing of U12-type introns in pre-mRNAs. This is 116 kDa U5 small nuclear ribonucleoprotein component (EFTUD2) from Gallus gallus (Chicken).